We begin with the raw amino-acid sequence, 307 residues long: Zinc transporter ZIP9 (307 aa).

A helical transmembrane segment spans residues 4 to 24; it reads FISISLLSLAMLVGCYVAGII. Asn-29 carries an N-linked (GlcNAc...) asparagine glycan. The next 5 membrane-spanning stretches (helical) occupy residues 35-55, 106-126, 146-166, 176-196, and 210-230; these read LKLV…AVIV, AYIG…DQIG, ITTT…LGAA, LIVF…LVSF, and HLLV…LGLS. Asn-241 carries N-linked (GlcNAc...) asparagine glycosylation. 2 helical membrane passes run 244–264 and 286–306; these read GVAM…HVLP and LEVA…VGHQ.

It belongs to the ZIP transporter (TC 2.A.5) family. In terms of tissue distribution, highly expressed in pancreas, testis, and pituitary and moderately in the kidney, liver, uterus, heart, prostate, and brain, whereas expression is lower in the ovary and colon.

It is found in the golgi apparatus. Its subcellular location is the trans-Golgi network membrane. The protein localises to the cell membrane. The protein resides in the cytoplasm. It localises to the perinuclear region. It is found in the mitochondrion. Its subcellular location is the nucleus. The enzyme catalyses Zn(2+)(in) = Zn(2+)(out). In terms of biological role, transports zinc ions across cell and organelle membranes into the cytoplasm and regulates intracellular zinc homeostasis. Participates in the zinc ions efflux out of the secretory compartments. Regulates intracellular zinc level, resulting in the enhancement of AKT1 and MAPK3/MAPK1 (Erk1/2) phosphorylation in response to the BCR activation. Also functions as a membrane androgen receptor that mediates, through a G protein, the non-classical androgen signaling pathway, characterized by the activation of MAPK3/MAPK1 (Erk1/2) and transcription factors CREB1 or ATF1. This pathway contributes to CLDN1 and CLDN5 expression and tight junction formation between adjacent Sertoli cells. Mediates androgen-induced vascular endothelial cell proliferation through activation of an inhibitory G protein leading to the AKT1 and MAPK3/MAPK1 (Erk1/2) activation which in turn modulate inhibition (phosphorylation) of GSK3B and CCND1 transcription. Moreover, has dual functions as a membrane-bound androgen receptor and as an androgen-dependent zinc transporter both of which are mediated through an inhibitory G protein (Gi) that mediates both MAP kinase and zinc signaling leading to the androgen-dependent apoptotic process. The sequence is that of Zinc transporter ZIP9 from Homo sapiens (Human).